Here is a 264-residue protein sequence, read N- to C-terminus: Proteasome assembly chaperone 2 (264 aa).

A Phosphothreonine modification is found at threonine 137.

Belongs to the PSMG2 family. As to quaternary structure, forms a heterodimer with PSMG1. The PSMG1-PSMG2 heterodimer interacts directly with the PSMA5 and PSMA7 proteasome alpha subunits. Post-translationally, degraded by the proteasome upon completion of 20S proteasome maturation.

It localises to the nucleus. Chaperone protein which promotes assembly of the 20S proteasome as part of a heterodimer with PSMG1. The PSMG1-PSMG2 heterodimer binds to the PSMA5 and PSMA7 proteasome subunits, promotes assembly of the proteasome alpha subunits into the heteroheptameric alpha ring and prevents alpha ring dimerization. The chain is Proteasome assembly chaperone 2 from Bos taurus (Bovine).